Consider the following 54-residue polypeptide: ATP synthase protein 8 (54 aa).

Residues W9 to I29 traverse the membrane as a helical segment.

The protein belongs to the ATPase protein 8 family. In terms of assembly, F-type ATPases have 2 components, CF(1) - the catalytic core - and CF(0) - the membrane proton channel.

It localises to the mitochondrion membrane. Functionally, mitochondrial membrane ATP synthase (F(1)F(0) ATP synthase or Complex V) produces ATP from ADP in the presence of a proton gradient across the membrane which is generated by electron transport complexes of the respiratory chain. F-type ATPases consist of two structural domains, F(1) - containing the extramembraneous catalytic core and F(0) - containing the membrane proton channel, linked together by a central stalk and a peripheral stalk. During catalysis, ATP synthesis in the catalytic domain of F(1) is coupled via a rotary mechanism of the central stalk subunits to proton translocation. Part of the complex F(0) domain. Minor subunit located with subunit a in the membrane. This chain is ATP synthase protein 8 (MT-ATP8), found in Arbacia lixula (Black urchin).